The primary structure comprises 260 residues: Cytosolic Fe-S cluster assembly factor Nubp2 homolog (260 aa).

14-21 (GKGGVGKS) lines the ATP pocket. [4Fe-4S] cluster is bound by residues Cys188 and Cys191.

It belongs to the Mrp/NBP35 ATP-binding proteins family. NUBP2/CFD1 subfamily. In terms of assembly, heterotetramer of 2 Nubp1 and 2 Nubp2 chains. Requires [4Fe-4S] cluster as cofactor.

It is found in the cytoplasm. In terms of biological role, component of the cytosolic iron-sulfur (Fe/S) protein assembly (CIA) machinery. Required for maturation of extramitochondrial Fe-S proteins. The Nubp1-Nubp2 heterotetramer forms a Fe-S scaffold complex, mediating the de novo assembly of an Fe-S cluster and its transfer to target apoproteins. The polypeptide is Cytosolic Fe-S cluster assembly factor Nubp2 homolog (Drosophila melanogaster (Fruit fly)).